The chain runs to 648 residues: Protein kinase YegI (648 aa).

Positions 15-302 (TTLGRELGKG…KAWVAALDSL (288 aa)) constitute a Protein kinase domain. Residues 21–29 (LGKGGEGAV) and Lys-41 contribute to the ATP site. Asp-143 (proton acceptor) is an active-site residue.

Post-translationally, autophosphorylated. Dephosphorylated by PphC.

Probable serine/threonine kinase. The sequence is that of Protein kinase YegI (yegI) from Escherichia coli (strain K12).